The following is a 550-amino-acid chain: Eukaryotic translation initiation factor 3 subunit D-2 (550 aa).

The tract at residues 97-126 is disordered; the sequence is RGRGFRPSVHNNPRNVRNQRGRKGNAMGNI. Positions 287-301 are RNA gate; the sequence is KFDMLTVNETSQEPP. The segment at 530–550 is disordered; that stretch reads SDVSEEEESSEDKPFGLSMNN.

Belongs to the eIF-3 subunit D family. As to quaternary structure, component of the eukaryotic translation initiation factor 3 (eIF-3) complex. The eIF-3 complex interacts with pix.

The protein resides in the cytoplasm. Functionally, mRNA cap-binding component of the eukaryotic translation initiation factor 3 (eIF-3) complex, which is involved in protein synthesis of a specialized repertoire of mRNAs and, together with other initiation factors, stimulates binding of mRNA and methionyl-tRNAi to the 40S ribosome. The eIF-3 complex specifically targets and initiates translation of a subset of mRNAs involved in cell proliferation. In the eIF-3 complex, eif3d specifically recognizes and binds the 7-methylguanosine cap of a subset of mRNAs. The protein is Eukaryotic translation initiation factor 3 subunit D-2 of Drosophila willistoni (Fruit fly).